Consider the following 63-residue polypeptide: Large ribosomal subunit protein bL28 (63 aa).

This sequence belongs to the bacterial ribosomal protein bL28 family.

This is Large ribosomal subunit protein bL28 from Alkaliphilus oremlandii (strain OhILAs) (Clostridium oremlandii (strain OhILAs)).